Consider the following 414-residue polypeptide: Gamma-glutamyl phosphate reductase (414 aa).

Belongs to the gamma-glutamyl phosphate reductase family.

The protein localises to the cytoplasm. It carries out the reaction L-glutamate 5-semialdehyde + phosphate + NADP(+) = L-glutamyl 5-phosphate + NADPH + H(+). It participates in amino-acid biosynthesis; L-proline biosynthesis; L-glutamate 5-semialdehyde from L-glutamate: step 2/2. In terms of biological role, catalyzes the NADPH-dependent reduction of L-glutamate 5-phosphate into L-glutamate 5-semialdehyde and phosphate. The product spontaneously undergoes cyclization to form 1-pyrroline-5-carboxylate. The sequence is that of Gamma-glutamyl phosphate reductase from Xanthomonas campestris pv. campestris (strain B100).